The primary structure comprises 378 residues: Trans-enoyl reductase poxP (378 aa).

Cys62–Lys65 is a binding site for NADP(+). Ser151 to Ile158 is a substrate binding site. NADP(+) contacts are provided by residues Ser187–Thr190, Ser210–Asn213, Tyr228, and Leu275–Glu276. Residue Gly295 to Ser299 participates in substrate binding. Thr364 to Ser365 provides a ligand contact to NADP(+).

The protein belongs to the zinc-containing alcohol dehydrogenase family. In terms of assembly, monomer.

It functions in the pathway secondary metabolite biosynthesis. Functionally, trans-enoyl reductase; part of the gene cluster that mediates the biosynthesis of oxaleimides, cytotoxic compounds containing an unusual disubstituted succinimide moiety. The first step of the pathway is provided by the HR-PKS poxF that serves in a new mode of collaborative biosynthesis with the PKS-NRPS poxE, by providing the olefin containing amino acid substrate via the synthesis of an ACP-bound dec-4-enoate. The cytochrome P450 monooxygenase poxM-catalyzed oxidation at the alpha-position creates the enzyme-bound 2-hydroxydec-4-enoyl-ACP thioester, which may be prone to spontaneous hydrolysis to yield 2-hydroxydec-4-enoic acid due to increased electrophilicity of the carbonyl. 2-hydroxydec-4-enoic acid can then be further oxidized by poxM to yield the alpha-ketoacid 2-oxodec-4-enoicacid, which is reductively aminated by the aminotransferase poxL to yield (S,E)-2-aminodec-4-enoic acid. The Hybrid PKS-NRPS synthetase poxE then performs condensation between the octaketide product of its PKS modules and the amino group of (S,E)-2-aminodec-4-enoic acid which is activated and incorporated by the adenylation domain. The resulting aminoacyl product can be cyclized by the Diels-Alderase PoxQ and reductively released by the reductive (R) domain of poxE to yield an aldehyde intermediate. The released aldehyde is then substrate for a Knoevenagel condensation by the hydrolyase poxO followed by an oxidation at the 5-position of the pyrrolidone ring. The presence of the olefin from the amino acid building block allows for migration of the substituted allyl group to occur. This allylic transposition reaction takes place in a conjugate addition, semipinacol-like fashion to yield a succinimide intermediate. Iterative two-electron oxidations of the C7 methyl of the succinimide intermediate to the carboxylic acid can be catalyzed by one of two remaining cytochrome P450 monooxygenasess poxC or poxD to yield oxaleimide A. Subsequent oxidation yields the maleimide scaffold oxaleimide I. Both oxaleimide A and oxaleimide I can undergo oxidative modifications in the decalin ring to yield the series of products oxaleimides B to H. This is Trans-enoyl reductase poxP from Penicillium oxalicum.